The following is a 131-amino-acid chain: Histone H2A.1 (131 aa).

N-acetylserine is present on serine 2. N6-acetyllysine occurs at positions 4 and 7. Glutamine 105 is modified (N5-methylglutamine). Residue lysine 126 forms a Glycyl lysine isopeptide (Lys-Gly) (interchain with G-Cter in SUMO) linkage. Position 128 is a phosphoserine (serine 128). The [ST]-Q motif motif lies at 128–129 (SQ).

The protein belongs to the histone H2A family. The nucleosome is a histone octamer containing two molecules each of H2A, H2B, H3 and H4 assembled in one H3-H4 heterotetramer and two H2A-H2B heterodimers. The octamer wraps approximately 147 bp of DNA. In terms of processing, phosphorylated to form H2AS128ph (gamma-H2A) in response to DNA double-strand breaks (DSBs) generated by exogenous genotoxic agents and by stalled replication forks. Phosphorylation is dependent on the DNA damage checkpoint kinases MEC1/ATR and TEL1/ATM, spreads on either side of a detected DSB site and may mark the surrounding chromatin for recruitment of proteins required for DNA damage signaling and repair. Gamma-H2A is removed from the DNA prior to the strand invasion-primer extension step of the repair process and subsequently dephosphorylated by PPH3, a component of the histone H2A phosphatase complex (HTP-C). Dephosphorylation is necessary for efficient recovery from the DNA damage checkpoint. Post-translationally, sumoylation on Lys-126 may lead to transcriptional repression. Acetylated by ESA1 to form H2AK4ac and H2AK7ac.

It localises to the nucleus. It is found in the chromosome. Its function is as follows. Core component of nucleosome which plays a central role in DNA double strand break (DSB) repair. Nucleosomes wrap and compact DNA into chromatin, limiting DNA accessibility to the cellular machineries which require DNA as a template. Histones thereby play a central role in transcription regulation, DNA repair, DNA replication and chromosomal stability. DNA accessibility is regulated via a complex set of post-translational modifications of histones, also called histone code, and nucleosome remodeling. The protein is Histone H2A.1 (HTA1) of Eremothecium gossypii (strain ATCC 10895 / CBS 109.51 / FGSC 9923 / NRRL Y-1056) (Yeast).